Here is a 20-residue protein sequence, read N- to C-terminus: Glutathione S-transferase 2 (20 aa).

The GST N-terminal domain maps to 1–20 (GYKVTYFAIRGLAEPIXLLL). Tyrosine 6 contacts glutathione.

The protein belongs to the GST superfamily. Sigma family.

It carries out the reaction RX + glutathione = an S-substituted glutathione + a halide anion + H(+). Conjugation of reduced glutathione to a wide number of exogenous and endogenous hydrophobic electrophiles. In Ascaris suum (Pig roundworm), this protein is Glutathione S-transferase 2 (GST2).